Consider the following 797-residue polypeptide: Probable exo-1,4-beta-xylosidase bxlB (797 aa).

The first 21 residues, Met-1–Ala-21, serve as a signal peptide directing secretion. Asn-86 and Asn-126 each carry an N-linked (GlcNAc...) asparagine glycan. Asp-312 is an active-site residue. Asn-364, Asn-431, Asn-442, Asn-483, Asn-644, and Asn-787 each carry an N-linked (GlcNAc...) asparagine glycan.

This sequence belongs to the glycosyl hydrolase 3 family.

Its subcellular location is the secreted. The enzyme catalyses Hydrolysis of (1-&gt;4)-beta-D-xylans, to remove successive D-xylose residues from the non-reducing termini.. It participates in glycan degradation; xylan degradation. Its function is as follows. Xylan 1,4-beta-xylosidase involved in the hydrolysis of xylan, a major structural heterogeneous polysaccharide found in plant biomass representing the second most abundant polysaccharide in the biosphere, after cellulose. This Aspergillus oryzae (strain ATCC 42149 / RIB 40) (Yellow koji mold) protein is Probable exo-1,4-beta-xylosidase bxlB (bxlB).